The sequence spans 905 residues: MAASLSERLFSLELLVDWVRLEARLLPSPAAAVEQEEEEEEKEQGEASSPRGLCPAVAFRLLDFPTLLVYPPDGPGAPAAEPWPGVIRFGRGKSCLFRLQPATLHCRLLRTPLATLLLQLPPGRPTPTPQLLGACDISLATAAHRVVGPAASGCSHRHRGRFPLHNRVGERTGDIALAYRLTDLGSRLLSQLERPLTFTRTGGGAEVSPQTQQERQQLQQPASQPSPKEADKPLGELEIPEAQKDLKEMVKSKAECDNVGSVENGKTNSVVTCSGAGNGRNVSSLNEEVTELDMETNIFCPPPLYYTNLTQEKPPPAQAKITIEPQMNAPEEMDDASPEKKRVNPPAHRSCLKHPSSAAHEHPPMLVNPPHIQNIGATNQTCQTEQNRINTIRQLPLLNALLVELSLLYDQPVTSPAHIHPHLAWLYRTEDKKSPESSAKSTCRSEAKKDKRSVGGCEKSVSLQYKKNQIENYKEDKYSEKSSGALHKRVPKGRLLYGLTNTLRLRLKLTNPDMLVVHEKRELYRKRQSQMLGTKFRIPSSKVKLLSSAEQSQKPQLPEDKYLDSDASFTENSDTSRQISGVFDEPSTSKETKLKYATEKKTVDCSKNRINNVSLEEVVSPANSIIPERLTPTNILGGNVEMKIQSPCVFQQDAVVDRIVDKEIDIRQVKTTDNDILMADISDKRTGKNSCYENISELKYSDDLSSPCYSEDFCTSEDTSRSFKAHDSSSRTENPKHSQYTSKSSDTGVSKKKNSSDRSSILSPPFSAGSPVHSYRKFHISKTQDKSLEEASSISASDLSSTHWTEQKENQIDQNSMHNSEITKRAQDISVKTRSSWKSLEKSQSPQTSQVSSYLPSNVSELNVLDSSTSDHFEEGNDDVGSLNISKQCKDICELVINKLPGYTM.

7 disordered regions span residues 30-51 (AAAV…SSPR), 199-235 (TRTG…KPLG), 329-362 (APEE…AHEH), 434-458 (SPES…GGCE), 547-586 (SSAE…FDEP), 721-772 (RSFK…GSPV), and 786-855 (KSLE…SSYL). Over residues 34–43 (EQEEEEEEKE) the composition is skewed to acidic residues. A compositionally biased stretch (low complexity) spans 208 to 227 (SPQTQQERQQLQQPASQPSP). A compositionally biased stretch (basic and acidic residues) spans 443–453 (CRSEAKKDKRS). Residues 567-579 (ASFTENSDTSRQI) show a composition bias toward polar residues. Residues 721 to 736 (RSFKAHDSSSRTENPK) show a composition bias toward basic and acidic residues. Polar residues predominate over residues 737–748 (HSQYTSKSSDTG). The span at 790 to 801 (EASSISASDLSS) shows a compositional bias: low complexity. Polar residues predominate over residues 830 to 855 (SVKTRSSWKSLEKSQSPQTSQVSSYL).

As to quaternary structure, interacts (via middle region) with microtubules. In terms of tissue distribution, expressed in different cell lines (at protein level).

It localises to the cytoplasm. Its subcellular location is the cytoskeleton. It is found in the spindle pole. The protein localises to the microtubule organizing center. The protein resides in the centrosome. It localises to the midbody. Its function is as follows. Microtubule-associated protein (MAP) that plays a role in the regulation of cell division; promotes microtubule stability and participates in the organization of the spindle midzone and normal progress of cytokinesis. The polypeptide is Microtubule-associated protein 10 (MAP10) (Homo sapiens (Human)).